The primary structure comprises 809 residues: Glycerol-3-phosphate acyltransferase (809 aa).

The HXXXXD motif signature appears at 306–311 (HRSHMD).

The protein belongs to the GPAT/DAPAT family.

It localises to the cell inner membrane. The enzyme catalyses sn-glycerol 3-phosphate + an acyl-CoA = a 1-acyl-sn-glycero-3-phosphate + CoA. Its pathway is phospholipid metabolism; CDP-diacylglycerol biosynthesis; CDP-diacylglycerol from sn-glycerol 3-phosphate: step 1/3. This is Glycerol-3-phosphate acyltransferase from Vibrio vulnificus (strain CMCP6).